A 200-amino-acid polypeptide reads, in one-letter code: Outer-membrane lipoprotein carrier protein (200 aa).

The N-terminal stretch at 1 to 18 (MIGLFLAAPLVLSSAVWA) is a signal peptide.

The protein belongs to the LolA family. As to quaternary structure, monomer.

The protein resides in the periplasm. Functionally, participates in the translocation of lipoproteins from the inner membrane to the outer membrane. Only forms a complex with a lipoprotein if the residue after the N-terminal Cys is not an aspartate (The Asp acts as a targeting signal to indicate that the lipoprotein should stay in the inner membrane). This chain is Outer-membrane lipoprotein carrier protein, found in Photobacterium profundum (strain SS9).